The chain runs to 176 residues: Flavodoxin 1 (176 aa).

The Flavodoxin-like domain maps to 4 to 165; the sequence is HGIFFGSDTG…RVEKWVKQIS (162 aa).

It belongs to the flavodoxin family. It depends on FMN as a cofactor.

Low-potential electron donor to a number of redox enzymes. The polypeptide is Flavodoxin 1 (fldA) (Shigella flexneri).